The following is a 187-amino-acid chain: Transcriptional regulator VspR (187 aa).

Its function is as follows. Represses the transcription of several genes encoded within the Vibrio 7th pandemic island-1 (VSP-1), including dncV, VC_0176, VC_0178 and VC_0180. The chain is Transcriptional regulator VspR (vspR) from Vibrio cholerae serotype O1 (strain ATCC 39315 / El Tor Inaba N16961).